The following is a 391-amino-acid chain: Dual-specificity RNA methyltransferase RlmN (391 aa).

A disordered region spans residues 1–20; the sequence is MTSVVADSLTETKTDSQKPI. The segment covering 10-20 has biased composition (basic and acidic residues); it reads TETKTDSQKPI. The active-site Proton acceptor is the E120. The 241-residue stretch at 126–366 folds into the Radical SAM core domain; it reads DADRGTLCIS…APVRRTRGQD (241 aa). The cysteines at positions 133 and 371 are disulfide-linked. Residues C140, C144, and C147 each coordinate [4Fe-4S] cluster. Residues 195 to 196, S227, 249 to 251, and N328 contribute to the S-adenosyl-L-methionine site; these read GE and SLH. Residue C371 is the S-methylcysteine intermediate of the active site.

This sequence belongs to the radical SAM superfamily. RlmN family. Requires [4Fe-4S] cluster as cofactor.

It is found in the cytoplasm. It catalyses the reaction adenosine(2503) in 23S rRNA + 2 reduced [2Fe-2S]-[ferredoxin] + 2 S-adenosyl-L-methionine = 2-methyladenosine(2503) in 23S rRNA + 5'-deoxyadenosine + L-methionine + 2 oxidized [2Fe-2S]-[ferredoxin] + S-adenosyl-L-homocysteine. The enzyme catalyses adenosine(37) in tRNA + 2 reduced [2Fe-2S]-[ferredoxin] + 2 S-adenosyl-L-methionine = 2-methyladenosine(37) in tRNA + 5'-deoxyadenosine + L-methionine + 2 oxidized [2Fe-2S]-[ferredoxin] + S-adenosyl-L-homocysteine. Functionally, specifically methylates position 2 of adenine 2503 in 23S rRNA and position 2 of adenine 37 in tRNAs. m2A2503 modification seems to play a crucial role in the proofreading step occurring at the peptidyl transferase center and thus would serve to optimize ribosomal fidelity. This is Dual-specificity RNA methyltransferase RlmN from Zymomonas mobilis subsp. mobilis (strain ATCC 31821 / ZM4 / CP4).